A 502-amino-acid polypeptide reads, in one-letter code: Protein O-glucosyltransferase 2 (502 aa).

The signal sequence occupies residues M1–A19. Residues E24 to G130 form a Filamin repeat. N302 and N414 each carry an N-linked (GlcNAc...) asparagine glycan. A Prevents secretion from ER motif is present at residues K499 to L502.

The protein belongs to the KDELC family. Post-translationally, N-glycosylated.

The protein resides in the endoplasmic reticulum lumen. It catalyses the reaction L-seryl-[EGF-like domain protein] + UDP-alpha-D-glucose = 3-O-(beta-D-glucosyl)-L-seryl-[EGF-like domain protein] + UDP + H(+). The enzyme catalyses L-seryl-[EGF-like domain protein] + UDP-alpha-D-xylose = 3-O-(beta-D-xylosyl)-L-seryl-[EGF-like domain protein] + UDP + H(+). Its pathway is protein modification; protein glycosylation. In terms of biological role, protein glucosyltransferase that catalyzes the transfer of glucose from UDP-glucose to a serine residue within the consensus sequence peptide C-X-N-T-X-G-S-F-X-C. Can also catalyze the transfer of xylose from UDP-xylose but less efficiently. Specifically targets extracellular EGF repeats of proteins such as NOTCH1, NOTCH3, FBN1, FBN2 and LTBP1. May regulate the transport of NOTCH1 and NOTCH3 to the plasma membrane and thereby the Notch signaling pathway. This Homo sapiens (Human) protein is Protein O-glucosyltransferase 2.